The chain runs to 212 residues: Regulatory protein RecX (212 aa).

Belongs to the RecX family.

The protein localises to the cytoplasm. Functionally, modulates RecA activity. In Clostridium botulinum (strain Eklund 17B / Type B), this protein is Regulatory protein RecX.